A 365-amino-acid polypeptide reads, in one-letter code: MTITGIIAEFNPFHNGHKYLLDQAEGLKIVAMSGNFMQRGEPAIVDKWTRAQMALENGADLVVELPFLVSVQAADFFGQGAVDILDRLGIDSLVFGTEEVRDYQKIADLYTEKGAEMEKFVENLPDSLSYPQKTQAMWKEFAGLDFSGNTPNHVLALAYAKAVAGRNIKLHPIQRQGAGYHSVNKDVDFASATALRQHQKDQDFLERFMPSVALFEQASKVIWEDYFPLLRYQILSNPDLTTIYQVNQEMAVRIKEAIKTAQSVEELVELVTTKRYTKARVRRLLSYILVQARESNLPEAIHVLGFTEKGRQHLKSLKGQVSLVSRIGKEPWDAMTQKADQIYQLGKPSIAEQNFGRVPIRIETN.

Residues 7–20 (IAEF…HKYL), G96, N152, and R175 each bind ATP.

Belongs to the TmcAL family.

It localises to the cytoplasm. The catalysed reaction is cytidine(34) in elongator tRNA(Met) + acetate + ATP = N(4)-acetylcytidine(34) in elongator tRNA(Met) + AMP + diphosphate. In terms of biological role, catalyzes the formation of N(4)-acetylcytidine (ac(4)C) at the wobble position of elongator tRNA(Met), using acetate and ATP as substrates. First activates an acetate ion to form acetyladenylate (Ac-AMP) and then transfers the acetyl group to tRNA to form ac(4)C34. The chain is tRNA(Met) cytidine acetate ligase from Streptococcus pneumoniae (strain Hungary19A-6).